We begin with the raw amino-acid sequence, 387 residues long: Putative gustatory receptor 22d (387 aa).

Over 1-43 the chain is Cytoplasmic; that stretch reads MFRPRCGLRQKFVYVILKSILYSSWLLGIFPFKYEPKKRRLRR. A helical membrane pass occupies residues 44–64; sequence SMWLILFGVVISSSLLILMVK. Over 65–82 the chain is Extracellular; the sequence is QSAEDREHGIMLDVFQRN. The chain crosses the membrane as a helical span at residues 83–103; sequence ALLYQISSLMGVVGVVSICTV. Residues 104 to 142 are Cytoplasmic-facing; that stretch reads HLRTLWRSKHLEEIYNGLMLLEAKYFCSNAVECPAFDGY. The chain crosses the membrane as a helical span at residues 143-163; that stretch reads VIQKGVVIVVGLLAPWMVHFG. Over 164 to 184 the chain is Extracellular; that stretch reads MPDSKLPVLNVLVVSMVKLGT. The chain crosses the membrane as a helical span at residues 185-205; that stretch reads LLLALHYHLGVVIIYRFVWLI. Residues 206 to 252 are Cytoplasmic-facing; that stretch reads NRELLSLVCSLRGNHKGSSSRVRFLLKLYNKLVNLYSKLADCYDCQT. The chain crosses the membrane as a helical span at residues 253-273; that stretch reads VLMMAIFLAANIIVCFYMIVY. Residues 274–281 lie on the Extracellular side of the membrane; the sequence is RISLSKMS. Residues 282 to 302 traverse the membrane as a helical segment; it reads FFVMLIMFPLAIANNFMDFWL. At 303 to 363 the chain is on the cytoplasmic side; sequence SMKVCDLLQK…HCGLFHVNRE (61 aa). A helical transmembrane segment spans residues 364–384; sequence MGFKMFVASVLYLLYLVQFDY. Residues 385–387 lie on the Extracellular side of the membrane; the sequence is MNL.

This sequence belongs to the insect chemoreceptor superfamily. Gustatory receptor (GR) family. Gr22e subfamily. Expressed in neurons of the dorsal pharyngeal sense organs of larvae.

The protein localises to the cell membrane. Functionally, probable gustatory receptor which mediates acceptance or avoidance behavior, depending on its substrates. This is Putative gustatory receptor 22d from Drosophila melanogaster (Fruit fly).